The sequence spans 228 residues: 7-cyano-7-deazaguanine synthase (228 aa).

ATP is bound at residue 8-18; it reads LSGGLDSTTCL. Zn(2+) is bound by residues Cys188, Cys198, Cys201, and Cys204.

It belongs to the QueC family. The cofactor is Zn(2+).

The enzyme catalyses 7-carboxy-7-deazaguanine + NH4(+) + ATP = 7-cyano-7-deazaguanine + ADP + phosphate + H2O + H(+). It participates in purine metabolism; 7-cyano-7-deazaguanine biosynthesis. In terms of biological role, catalyzes the ATP-dependent conversion of 7-carboxy-7-deazaguanine (CDG) to 7-cyano-7-deazaguanine (preQ(0)). The chain is 7-cyano-7-deazaguanine synthase from Legionella pneumophila subsp. pneumophila (strain Philadelphia 1 / ATCC 33152 / DSM 7513).